A 284-amino-acid chain; its full sequence is Bifunctional protein FolD (284 aa).

NADP(+)-binding positions include 166–168 (GAS) and Ile232.

Belongs to the tetrahydrofolate dehydrogenase/cyclohydrolase family. In terms of assembly, homodimer.

It catalyses the reaction (6R)-5,10-methylene-5,6,7,8-tetrahydrofolate + NADP(+) = (6R)-5,10-methenyltetrahydrofolate + NADPH. The enzyme catalyses (6R)-5,10-methenyltetrahydrofolate + H2O = (6R)-10-formyltetrahydrofolate + H(+). It participates in one-carbon metabolism; tetrahydrofolate interconversion. Catalyzes the oxidation of 5,10-methylenetetrahydrofolate to 5,10-methenyltetrahydrofolate and then the hydrolysis of 5,10-methenyltetrahydrofolate to 10-formyltetrahydrofolate. This Shewanella baltica (strain OS223) protein is Bifunctional protein FolD.